The primary structure comprises 356 residues: UDP-N-acetylglucosamine--N-acetylmuramyl-(pentapeptide) pyrophosphoryl-undecaprenol N-acetylglucosamine transferase (356 aa).

UDP-N-acetyl-alpha-D-glucosamine-binding positions include 12–14 (TAG), arginine 166, serine 196, and glutamine 291.

It belongs to the glycosyltransferase 28 family. MurG subfamily.

Its subcellular location is the cell membrane. It carries out the reaction di-trans,octa-cis-undecaprenyl diphospho-N-acetyl-alpha-D-muramoyl-L-alanyl-D-glutamyl-meso-2,6-diaminopimeloyl-D-alanyl-D-alanine + UDP-N-acetyl-alpha-D-glucosamine = di-trans,octa-cis-undecaprenyl diphospho-[N-acetyl-alpha-D-glucosaminyl-(1-&gt;4)]-N-acetyl-alpha-D-muramoyl-L-alanyl-D-glutamyl-meso-2,6-diaminopimeloyl-D-alanyl-D-alanine + UDP + H(+). Its pathway is cell wall biogenesis; peptidoglycan biosynthesis. Functionally, cell wall formation. Catalyzes the transfer of a GlcNAc subunit on undecaprenyl-pyrophosphoryl-MurNAc-pentapeptide (lipid intermediate I) to form undecaprenyl-pyrophosphoryl-MurNAc-(pentapeptide)GlcNAc (lipid intermediate II). This is UDP-N-acetylglucosamine--N-acetylmuramyl-(pentapeptide) pyrophosphoryl-undecaprenol N-acetylglucosamine transferase from Geobacillus thermodenitrificans (strain NG80-2).